Here is a 639-residue protein sequence, read N- to C-terminus: Chaperone protein DnaK (639 aa).

Thr198 is subject to Phosphothreonine; by autocatalysis. The tract at residues 602–639 (QAKSQAQGGDNADAGKQANATADDVVDAEFEEVKDDKK) is disordered. Positions 625 to 639 (DVVDAEFEEVKDDKK) are enriched in acidic residues.

It belongs to the heat shock protein 70 family.

In terms of biological role, acts as a chaperone. The protein is Chaperone protein DnaK of Shewanella baltica (strain OS155 / ATCC BAA-1091).